A 256-amino-acid polypeptide reads, in one-letter code: Undecaprenyl-diphosphatase (256 aa).

8 helical membrane-spanning segments follow: residues 5-25 (IIEIIILSIVQGISEFLPISS), 41-61 (NSLMIDVSLHLGSLLAIVFYF), 74-94 (LLSLLIIGSIPIVIAGYVISS), 100-120 (LLENNLKIIAWTTLIFGIILY), 135-155 (LNFKTILYIGLFQILALIPGV), 180-200 (FLLAIPAIAGASVLQLKNAIG), 208-228 (LVLISITLSFLFSYFTVKFFL), and 234-254 (FSLNVFVIYRIIISIILFIII).

It belongs to the UppP family.

It localises to the cell inner membrane. The enzyme catalyses di-trans,octa-cis-undecaprenyl diphosphate + H2O = di-trans,octa-cis-undecaprenyl phosphate + phosphate + H(+). Catalyzes the dephosphorylation of undecaprenyl diphosphate (UPP). Confers resistance to bacitracin. This chain is Undecaprenyl-diphosphatase, found in Pelagibacter ubique (strain HTCC1062).